The chain runs to 446 residues: Tubulin beta chain (446 aa).

The GTP site is built by glutamine 11, glutamate 69, serine 138, glycine 142, threonine 143, glycine 144, asparagine 204, and asparagine 226. Residue glutamate 69 participates in Mg(2+) binding. Residues glutamine 423–glutamate 446 form a disordered region. The segment covering glycine 429–glutamate 446 has biased composition (acidic residues).

The protein belongs to the tubulin family. As to quaternary structure, dimer of alpha and beta chains. A typical microtubule is a hollow water-filled tube with an outer diameter of 25 nm and an inner diameter of 15 nM. Alpha-beta heterodimers associate head-to-tail to form protofilaments running lengthwise along the microtubule wall with the beta-tubulin subunit facing the microtubule plus end conferring a structural polarity. Microtubules usually have 13 protofilaments but different protofilament numbers can be found in some organisms and specialized cells. It depends on Mg(2+) as a cofactor.

It localises to the cytoplasm. It is found in the cytoskeleton. Its function is as follows. Tubulin is the major constituent of microtubules, a cylinder consisting of laterally associated linear protofilaments composed of alpha- and beta-tubulin heterodimers. Microtubules grow by the addition of GTP-tubulin dimers to the microtubule end, where a stabilizing cap forms. Below the cap, tubulin dimers are in GDP-bound state, owing to GTPase activity of alpha-tubulin. In Pestalotiopsis microspora, this protein is Tubulin beta chain (TUBB).